Consider the following 134-residue polypeptide: Holo-[acyl-carrier-protein] synthase (134 aa).

2 residues coordinate Mg(2+): Asp-8 and Glu-57.

This sequence belongs to the P-Pant transferase superfamily. AcpS family. The cofactor is Mg(2+).

Its subcellular location is the cytoplasm. It catalyses the reaction apo-[ACP] + CoA = holo-[ACP] + adenosine 3',5'-bisphosphate + H(+). Functionally, transfers the 4'-phosphopantetheine moiety from coenzyme A to a Ser of acyl-carrier-protein. This Agrobacterium fabrum (strain C58 / ATCC 33970) (Agrobacterium tumefaciens (strain C58)) protein is Holo-[acyl-carrier-protein] synthase.